Reading from the N-terminus, the 469-residue chain is Dihydrolipoyl dehydrogenase (469 aa).

FAD contacts are provided by residues 40 to 48 (EKASLGGVC), Lys-57, and Ala-120. A disulfide bridge connects residues Cys-48 and Cys-53. NAD(+) contacts are provided by residues 186–190 (GGGAI), Glu-209, and 275–278 (AVGV). FAD contacts are provided by Asp-317 and Ala-325. The active-site Proton acceptor is the His-450.

Belongs to the class-I pyridine nucleotide-disulfide oxidoreductase family. As to quaternary structure, homodimer. Requires FAD as cofactor.

The protein resides in the cytoplasm. It catalyses the reaction N(6)-[(R)-dihydrolipoyl]-L-lysyl-[protein] + NAD(+) = N(6)-[(R)-lipoyl]-L-lysyl-[protein] + NADH + H(+). In terms of biological role, lipoamide dehydrogenase is a component of the alpha-ketoacid dehydrogenase complexes. The polypeptide is Dihydrolipoyl dehydrogenase (lpd) (Chlorobaculum parvum (strain DSM 263 / NCIMB 8327) (Chlorobium vibrioforme subsp. thiosulfatophilum)).